The chain runs to 337 residues: Methionine import ATP-binding protein MetN (337 aa).

The region spanning 4–240 is the ABC transporter domain; it reads IKNLEITYPG…PWHPITKEFV (237 aa). Position 37–44 (37–44) interacts with ATP; that stretch reads GLSGAGKS.

It belongs to the ABC transporter superfamily. Methionine importer (TC 3.A.1.24) family. In terms of assembly, the complex is composed of two ATP-binding proteins (MetN), two transmembrane proteins (MetI) and a solute-binding protein (MetQ).

The protein resides in the cell membrane. The enzyme catalyses L-methionine(out) + ATP + H2O = L-methionine(in) + ADP + phosphate + H(+). The catalysed reaction is D-methionine(out) + ATP + H2O = D-methionine(in) + ADP + phosphate + H(+). Functionally, part of the ABC transporter complex MetNIQ involved in methionine import. Responsible for energy coupling to the transport system. The polypeptide is Methionine import ATP-binding protein MetN (Carboxydothermus hydrogenoformans (strain ATCC BAA-161 / DSM 6008 / Z-2901)).